Reading from the N-terminus, the 329-residue chain is Ubiquinol oxidase 1c, mitochondrial (329 aa).

A mitochondrion-targeting transit peptide spans M1–F45. A helical membrane pass occupies residues A154–F174. E158, E197, and H200 together coordinate Fe cation. Residues A216–S236 form a helical membrane-spanning segment. Residues E248, E299, and H302 each contribute to the Fe cation site.

The protein belongs to the alternative oxidase family. In terms of assembly, homodimer; disulfide-linked. It depends on Fe cation as a cofactor. As to expression, expressed in roots, stems, leaves, cotyledons and flowers. High expression in stamens.

It is found in the mitochondrion inner membrane. It carries out the reaction 2 a ubiquinol + O2 = 2 a ubiquinone + 2 H2O. Catalyzes the cyanide-resistant oxidation of ubiquinol and the reduction of molecular oxygen to water, but does not translocate protons and consequently is not linked to oxidative phosphorylation. May increase respiration when the cytochrome respiratory pathway is restricted, or in response to low temperatures. This is Ubiquinol oxidase 1c, mitochondrial (AOX1C) from Arabidopsis thaliana (Mouse-ear cress).